A 232-amino-acid polypeptide reads, in one-letter code: Peroxiredoxin (232 aa).

The 156-residue stretch at 6–161 folds into the Thioredoxin domain; the sequence is PSIGEKFPEI…ILRLIESLQI (156 aa). The Cysteine sulfenic acid (-SOH) intermediate role is filled by Cys-48. A substrate-binding site is contributed by Arg-124. Residues Cys-203 and Cys-209 are joined by a disulfide bond.

It belongs to the peroxiredoxin family. Prx6 subfamily. As to quaternary structure, homodecamer. Pentamer of dimers that assemble into a ring structure.

It is found in the cytoplasm. The catalysed reaction is a hydroperoxide + [thioredoxin]-dithiol = an alcohol + [thioredoxin]-disulfide + H2O. Functionally, thiol-specific peroxidase that catalyzes the reduction of hydrogen peroxide and organic hydroperoxides to water and alcohols, respectively. Plays a role in cell protection against oxidative stress by detoxifying peroxides. In Hyperthermus butylicus (strain DSM 5456 / JCM 9403 / PLM1-5), this protein is Peroxiredoxin.